A 434-amino-acid chain; its full sequence is ATP-dependent protease ATPase subunit HslU (434 aa).

ATP is bound by residues Val18, 60-65, Asp247, Glu312, and Arg384; that span reads GVGKTE.

Belongs to the ClpX chaperone family. HslU subfamily. As to quaternary structure, a double ring-shaped homohexamer of HslV is capped on each side by a ring-shaped HslU homohexamer. The assembly of the HslU/HslV complex is dependent on binding of ATP.

The protein resides in the cytoplasm. Its function is as follows. ATPase subunit of a proteasome-like degradation complex; this subunit has chaperone activity. The binding of ATP and its subsequent hydrolysis by HslU are essential for unfolding of protein substrates subsequently hydrolyzed by HslV. HslU recognizes the N-terminal part of its protein substrates and unfolds these before they are guided to HslV for hydrolysis. The polypeptide is ATP-dependent protease ATPase subunit HslU (Bradyrhizobium sp. (strain BTAi1 / ATCC BAA-1182)).